The chain runs to 147 residues: Globin (147 aa).

Positions S2–Q147 constitute a Globin domain. Heme b-binding residues include H64 and H95.

This sequence belongs to the globin family. As to quaternary structure, homodimer or homooligomer.

The sequence is that of Globin from Aequiyoldia eightsii (Antarctic yoldia).